The primary structure comprises 2467 residues: Polyprotein P1234 (2467 aa).

An Alphavirus-like MT domain is found at 27-258 (ESQQVTPNDH…ESRKLLRSWH (232 aa)). The tract at residues 243–262 (GSTLYTESRKLLRSWHLPSV) is nsP1 membrane-binding. S-palmitoyl cysteine; by host attachment occurs at residues Cys-416 and Cys-418. Positions 689–841 (DLINPPFHEF…HNICTRVLHK (153 aa)) constitute a (+)RNA virus helicase ATP-binding domain. 720–727 (GVPGSGKS) serves as a coordination point for a ribonucleoside 5'-triphosphate. In terms of domain architecture, (+)RNA virus helicase C-terminal spans 842 to 990 (SISRRCTLPV…LEEWHEEHDG (149 aa)). The region spanning 1003–1325 (DPFQNKAKVC…QKLSSMYACN (323 aa)) is the Peptidase C9 domain. The interval 1004–1023 (PFQNKAKVCWAKCLVQVLET) is nucleolus localization signal. Catalysis depends on Cys-1012, which acts as the For cysteine protease nsP2 activity. Residues 1056 to 1065 (TRYYGVDLDS) carry the Nuclear export signal motif. His-1081 serves as the catalytic For cysteine protease nsP2 activity. The short motif at 1180 to 1184 (PHKRV) is the Nuclear localization signal element. Residues 1333 to 1492 (APSYRVRRAD…KIQEAIDRRT (160 aa)) enclose the Macro domain. The ADP-D-ribose site is built by Asp-1342, Asn-1356, Gly-1364, Gly-1444, and Phe-1446. Cys-1594, Cys-1596, Cys-1619, and Cys-1637 together coordinate Zn(2+). The segment at 1768-1803 (KVATEPPLEPEAPIPAPRKRRTTSTSPPHNPEDFVP) is disordered. Pro residues predominate over residues 1774 to 1783 (PLEPEAPIPA). 2 short sequence motifs (FGDF; binding to host G3BP1) span residues 1820–1823 (FGDL) and 1841–1844 (FGDI). A RdRp catalytic domain is found at 2221-2336 (DAVLETDIAS…HGVRSDPLMA (116 aa)).

In terms of assembly, interacts with non-structural protein 3. Interacts with RNA-directed RNA polymerase nsP4. Interacts with protease nsP2. interacts with itself. Interacts with mRNA-capping enzyme nsP1. Interacts with host DDX1. Interacts with host DDX3. Interacts (via C-terminus) with host G3BP1; this interaction inhibits the formation of host stress granules on viral mRNAs and the nsp3-G3BP1 complexes bind viral RNAs and probably orchestrate the assembly of viral replication complexes. Interacts (via C-terminus) with host G3BP2; this interaction inhibits the formation of host stress granules on viral mRNAs and the nsp3-G3BP2 complexes bind viral RNAs and probably orchestrate the assembly of viral replication complexes. As to quaternary structure, interacts with mRNA-capping enzyme nsP1. Interacts with protease nsP2. interacts with itself. In terms of assembly, interacts with RNA-directed RNA polymerase nsP4. Interacts with mRNA-capping enzyme nsP1. Interacts with KPNA1/karyopherin-alpha1; this interaction probably allows the active transport of protease nsP2 into the host nucleus. Mg(2+) is required as a cofactor. The cofactor is Mn(2+). Specific enzymatic cleavages in vivo yield mature proteins. The processing of the polyprotein is temporally regulated. In early stages (1.7 hpi), P1234 is first cleaved in trans through its nsP2 protease activity, releasing P123' and nsP4, which associate to form the early replication complex. At the same time, P1234 is also cut at the nsP1/nsP2 site early in infection but with lower efficiency. After replication of the viral minus-strand RNAs (4 hpi), the polyproteins are cut at the nsP1/nsP2 and nsP2/nsP3 sites very efficiently, preventing accumulation of P123' and P1234 and allowing the formation of the late replication complex. NsP3'/nsP4 site is not cleaved anymore and P34 is produced rather than nsP4. In terms of processing, specific enzymatic cleavages in vivo yield mature proteins. The processing of the polyprotein is temporally regulated. In early stages (1.7 hpi), P123 is cleaved at the nsP1/nsP2 site with low efficiency. After replication of the viral minus-strand RNAs (4 hpi), the polyproteins are cut at the nsP1/nsP2 and nsP2/nsP3 sites very efficiently, preventing accumulation of P123 and allowing the formation of the late replication complex. Post-translationally, palmitoylated by host palmitoyltransferases ZDHHC2 and ZDHHC19. Phosphorylated by host on serines and threonines. In terms of processing, ubiquitinated; targets the protein for rapid degradation via the ubiquitin system. Nsp4 is present in extremely low quantities due to low frequency of translation through the amber stop-codon and the degradation by the ubiquitin pathway.

The protein localises to the host cytoplasmic vesicle membrane. It is found in the host cell membrane. It localises to the host cell projection. The protein resides in the host filopodium. Its subcellular location is the host nucleus. The protein localises to the host cytoplasm. It carries out the reaction GTP + S-adenosyl-L-methionine = N(7)-methyl-GTP + S-adenosyl-L-homocysteine. The catalysed reaction is N(7)-methyl-GTP + L-histidyl-[protein] = N(tele)-(N(7)-methylguanosine 5'-phospho)-L-histidyl-[protein] + diphosphate. The enzyme catalyses N(tele)-(N(7)-methylguanosine 5'-phospho)-L-histidyl-[protein] + a 5'-end diphospho-(purine-ribonucleoside) in mRNA + H(+) = a 5'-end (N(7)-methyl 5'-triphosphoguanosine)-(purine-ribonucleoside) in mRNA + L-histidyl-[protein]. It catalyses the reaction a 5'-end triphospho-ribonucleoside in mRNA + H2O = a 5'-end diphospho-ribonucleoside in mRNA + phosphate + H(+). It carries out the reaction a ribonucleoside 5'-triphosphate + H2O = a ribonucleoside 5'-diphosphate + phosphate + H(+). The catalysed reaction is ATP + H2O = ADP + phosphate + H(+). The enzyme catalyses RNA(n) + a ribonucleoside 5'-triphosphate = RNA(n+1) + diphosphate. It catalyses the reaction RNA(n) + ATP = RNA(n)-3'-adenine ribonucleotide + diphosphate. It carries out the reaction 4-O-(ADP-D-ribosyl)-L-aspartyl-[protein] + H2O = L-aspartyl-[protein] + ADP-D-ribose + H(+). The catalysed reaction is 5-O-(ADP-D-ribosyl)-L-glutamyl-[protein] + H2O = L-glutamyl-[protein] + ADP-D-ribose + H(+). The enzyme catalyses ADP-alpha-D-ribose 1''-phosphate + H2O = ADP-D-ribose + phosphate. In terms of biological role, inactive precursor of the viral replicase, which is activated by cleavages carried out by the viral protease nsP2. Functionally, the early replication complex formed by the polyprotein P123 and nsP4 synthesizes minus-strand RNAs. As soon P123 is cleaved into mature proteins, the plus-strand RNAs synthesis begins. The early replication complex formed by the polyprotein P123' and nsP4 synthesizes minus-strand RNAs. Polyprotein P123' is a short-lived polyprotein that accumulates during early stage of infection. As soon P123' is cleaved into mature proteins, the plus-strand RNAs synthesis begins. Its function is as follows. Cytoplasmic capping enzyme that catalyzes two virus-specific reactions: methyltransferase and nsP1 guanylyltransferase. mRNA-capping is necessary since all viral RNAs are synthesized in the cytoplasm, and host capping enzymes are restricted to the nucleus. The enzymatic reaction involves a covalent link between 7-methyl-GMP and nsP1, whereas eukaryotic capping enzymes form a covalent complex only with GMP. nsP1 capping consists in the following reactions: GTP is first methylated into 7-methyl-GMP and then is covalently linked to nsP1 to form the m7GMp-nsP1 complex from which 7-methyl-GMP complex is transferred to the mRNA to create the cap structure. NsP1 is needed for the initiation of the minus-strand RNAs synthesis. Probably serves as a membrane anchor for the replication complex composed of nsP1-nsP4. Palmitoylated nsP1 is remodeling host cell cytoskeleton, and induces filopodium-like structure formation at the surface of the host cell. In terms of biological role, multifunctional protein whose N-terminus is part of the RNA polymerase complex and displays NTPase, RNA triphosphatase and helicase activities. NTPase and RNA triphosphatase are involved in viral RNA capping and helicase keeps a check on the dsRNA replication intermediates. The C-terminus harbors a protease that specifically cleaves the polyproteins and releases the mature proteins. Required for the shutoff of minus-strand RNAs synthesis. Specifically inhibits the host IFN response by promoting the nuclear export of host STAT1. Also inhibits host transcription by inducing rapid proteasome-dependent degradation of POLR2A, a catalytic subunit of the RNAPII complex. The resulting inhibition of cellular protein synthesis serves to ensure maximal viral gene expression and to evade host immune response. Functionally, seems to be essential for minus-strand RNAs and subgenomic 26S mRNAs synthesis. Displays mono-ADP-ribosylhydrolase activity. ADP-ribosylation is a post-translational modification that controls various processes of the host cell and the virus probably needs to revert it for optimal viral replication. Binds proteins of FXR family and sequesters them into the viral RNA replication complexes thereby inhibiting the formation of host stress granules on viral mRNAs. The nsp3'-FXR complexes bind viral RNAs and probably orchestrate the assembly of viral replication complexes, thanks to the ability of FXR family members to self-assemble and bind DNA. Seems to be essential for minus-strand RNAs and subgenomic 26S mRNAs synthesis. Displays mono-ADP-ribosylhydrolase activity. ADP-ribosylation is a post-translantional modification that controls various processes of the host cell and the virus probably needs to revert it for optimal viral replication. Binds proteins of G3BP family and sequesters them into the viral RNA replication complexes thereby inhibiting the formation of host stress granules on viral mRNAs. The nsp3-G3BP complexes bind viral RNAs and probably orchestrate the assembly of viral replication complexes, thanks to the ability of G3BP family members to self-assemble and bind DNA. Its function is as follows. RNA dependent RNA polymerase. Replicates genomic and antigenomic RNA by recognizing replications specific signals. The early replication complex formed by the polyprotein P123 and nsP4 synthesizes minus-strand RNAs. The late replication complex composed of fully processed nsP1-nsP4 is responsible for the production of genomic and subgenomic plus-strand RNAs. The core catalytic domain of nsP4 also possesses terminal adenylyltransferase (TATase) activity that is probably involved in maintenance and repair of the poly(A) tail, an element required for replication of the viral genome. This is Polyprotein P1234 from Getah virus (GETV).